The chain runs to 638 residues: Chaperone protein DnaK (638 aa).

A Phosphothreonine; by autocatalysis modification is found at threonine 198. 2 disordered regions span residues 539-559 (DGLA…LASD) and 602-638 (QAKA…DDKK). The segment covering 611-623 (GQAHDAGQEKPAD) has biased composition (basic and acidic residues). Over residues 624–638 (DVVDAEFEEVKDDKK) the composition is skewed to acidic residues.

It belongs to the heat shock protein 70 family.

Functionally, acts as a chaperone. This is Chaperone protein DnaK from Shewanella frigidimarina (strain NCIMB 400).